The primary structure comprises 300 residues: tRNA pseudouridine synthase A (300 aa).

Aspartate 67 serves as the catalytic Nucleophile. Tyrosine 125 is a substrate binding site.

The protein belongs to the tRNA pseudouridine synthase TruA family. Homodimer.

It catalyses the reaction uridine(38/39/40) in tRNA = pseudouridine(38/39/40) in tRNA. Functionally, formation of pseudouridine at positions 38, 39 and 40 in the anticodon stem and loop of transfer RNAs. This Synechococcus sp. (strain CC9902) protein is tRNA pseudouridine synthase A.